A 41-amino-acid chain; its full sequence is U15-myrmicitoxin-Tb1b (41 aa).

Positions 1–25 are cleaved as a signal peptide; sequence MKIVKLITIFAMIATLMVTVTNGEA. Position 40 is a histidine amide (His40).

Expressed by the venom gland.

It is found in the secreted. Venom protein with unknown function. Does not induce paralysis when a high dose is administered by intrathoracic injection into the blowfly Lucilia caesar. The polypeptide is U15-myrmicitoxin-Tb1b (Tetramorium bicarinatum (Tramp ant)).